The following is a 405-amino-acid chain: Cellobiose 2-epimerase (405 aa).

It belongs to the cellobiose 2-epimerase family.

It carries out the reaction D-cellobiose = beta-D-glucosyl-(1-&gt;4)-D-mannopyranose. Catalyzes the reversible epimerization of cellobiose to 4-O-beta-D-glucopyranosyl-D-mannose (Glc-Man). Can also epimerize lactose to epilactose. This is Cellobiose 2-epimerase (ce13) from Eubacterium cellulosolvens.